Here is a 337-residue protein sequence, read N- to C-terminus: Phosphate acyltransferase (337 aa).

The protein belongs to the PlsX family. As to quaternary structure, homodimer. Probably interacts with PlsY.

The protein resides in the cytoplasm. It carries out the reaction a fatty acyl-[ACP] + phosphate = an acyl phosphate + holo-[ACP]. Its pathway is lipid metabolism; phospholipid metabolism. Functionally, catalyzes the reversible formation of acyl-phosphate (acyl-PO(4)) from acyl-[acyl-carrier-protein] (acyl-ACP). This enzyme utilizes acyl-ACP as fatty acyl donor, but not acyl-CoA. The chain is Phosphate acyltransferase from Ehrlichia canis (strain Jake).